Here is a 148-residue protein sequence, read N- to C-terminus: MKCPYCSAPDSKVVNSRPSDDGASIRRRRECLNCARRFTTYERAQLEPLMVVKRSGPREAFNPDKLLRGLTLATEKRPVDADALRAFAYGFEDDVQASEIHSEEIGKRAMTFLRPLDDVAYIRFASVYRDFDSLERFIEEIRGLKDQS.

Residues 1-22 form a disordered region; that stretch reads MKCPYCSAPDSKVVNSRPSDDG. A zinc finger spans residues 3–34; that stretch reads CPYCSAPDSKVVNSRPSDDGASIRRRRECLNC. Residues 49-136 form the ATP-cone domain; the sequence is LMVVKRSGPR…VYRDFDSLER (88 aa).

It belongs to the NrdR family. The cofactor is Zn(2+).

Functionally, negatively regulates transcription of bacterial ribonucleotide reductase nrd genes and operons by binding to NrdR-boxes. In Deinococcus deserti (strain DSM 17065 / CIP 109153 / LMG 22923 / VCD115), this protein is Transcriptional repressor NrdR.